The primary structure comprises 455 residues: Chromosomal replication initiator protein DnaA (455 aa).

A domain I, interacts with DnaA modulators region spans residues 1–75 (MDTNNNIEKE…EILSQNKVGM (75 aa)). The domain II stretch occupies residues 75–106 (MHLAHSVDVRIEVAPKIQISTQSNINYKATKM). Residues 107 to 321 (SVKDSYTFEN…GAIIKISVNA (215 aa)) form a domain III, AAA+ region region. Residues G151, G153, K154, and T155 each contribute to the ATP site. Residues 322-455 (NLMNASIDLN…DKKTAFNSSE (134 aa)) form a domain IV, binds dsDNA region.

The protein belongs to the DnaA family. Oligomerizes as a right-handed, spiral filament on DNA at oriC.

It localises to the cytoplasm. In terms of biological role, plays an essential role in the initiation and regulation of chromosomal replication. ATP-DnaA binds to the origin of replication (oriC) to initiate formation of the DNA replication initiation complex once per cell cycle. Binds the DnaA box (a 9 base pair repeat at the origin) and separates the double-stranded (ds)DNA. Forms a right-handed helical filament on oriC DNA; dsDNA binds to the exterior of the filament while single-stranded (ss)DNA is stabiized in the filament's interior. The ATP-DnaA-oriC complex binds and stabilizes one strand of the AT-rich DNA unwinding element (DUE), permitting loading of DNA polymerase. After initiation quickly degrades to an ADP-DnaA complex that is not apt for DNA replication. Binds acidic phospholipids. The chain is Chromosomal replication initiator protein DnaA from Helicobacter pylori (strain HPAG1).